The sequence spans 631 residues: MTILENIRQPRDLKALPEEQLHELSEEIRQFLVHAVTRTGGHLGPNLGVVELTIALHRVFESPVDRILWDTGHQSYVHKLLTGRQDFSKLRGKGGLSGYPSREESEHDVIENSHASTALGWADGLAKARRVQGEKGHVVAVIGGRALTGGMAWEALNNIAAAKDQPLIIVVNDNERSYAPTIGGLANHLATLRTTDGYEKVLAWGKDVLLRTPIVGHPLYEALHGAKKGFKDAFAPQGMFEDLGLKYVGPIDGHDIGAVESALRRAKRFHGPVLVHCLTVKGRGYEPALAHEEDHFHTVGVMDPLTCEPLSPTDGPSWTSVFGDEIVRIGAEREDIVAITAAMLHPVGLARFADRFPDRVWDVGIAEQHAAVSAAGLATGGLHPVVAVYATFLNRAFDQLLMDVALHRCGVTFVLDRAGVTGVDGASHNGMWDMSVLQVVPGLRIAAPRDADHVRAQLREAVAVDDAPTLIRFPKESVGPRIPALDRVGGLDVLHRDERPEVLLVAVGVMAQVCLQTAELLRARGIGCTVVDPRWVKPVDPVLPPLAAEHRLVAVVEDNSRAAGVGSAVALALGDADVDVPVRRFGIPEQFLAHARRGEVLADIGLTPVEIAGRIGASLPVREEPAEEQPA.

Residues H73, 113–115, N174, Y285, and E367 contribute to the thiamine diphosphate site; that span reads SHA. N174 contributes to the Mg(2+) binding site.

Belongs to the transketolase family. DXPS subfamily. In terms of assembly, homodimer. The cofactor is Mg(2+). Thiamine diphosphate is required as a cofactor.

It carries out the reaction D-glyceraldehyde 3-phosphate + pyruvate + H(+) = 1-deoxy-D-xylulose 5-phosphate + CO2. It functions in the pathway metabolic intermediate biosynthesis; 1-deoxy-D-xylulose 5-phosphate biosynthesis; 1-deoxy-D-xylulose 5-phosphate from D-glyceraldehyde 3-phosphate and pyruvate: step 1/1. In terms of biological role, catalyzes the acyloin condensation reaction between C atoms 2 and 3 of pyruvate and glyceraldehyde 3-phosphate to yield 1-deoxy-D-xylulose-5-phosphate (DXP). This Streptomyces sp. (strain CL190) protein is 1-deoxy-D-xylulose-5-phosphate synthase.